Reading from the N-terminus, the 1534-residue chain is Dicer-like protein 1 (1534 aa).

The segment at 36 to 70 (PSAEPGVEHDQISPGESDEEIEENISDQNNSSSQK) is disordered. The segment covering 51-60 (ESDEEIEENI) has biased composition (acidic residues). A Helicase ATP-binding domain is found at 130–311 (LFERAKAQNT…AAATRLETLL (182 aa)). ATP is bound at residue 143 to 150 (LDTGSGKT). The DEAH box signature appears at 256 to 259 (DEAH). The region spanning 456–613 (ELSKHFSHAP…FCETLPEDRI (158 aa)) is the Helicase C-terminal domain. The Dicer dsRNA-binding fold domain occupies 648–738 (AIAILARYAS…KSIYHKRLPA (91 aa)). A PAZ domain is found at 888-1016 (KTVTFVQEND…ICAEPLKISA (129 aa)). RNase III domains follow at residues 1054 to 1199 (SDYA…LSGG) and 1250 to 1402 (ALQV…VDSD). Residues Glu-1291, Asp-1388, and Glu-1391 each contribute to the Mg(2+) site. A DRBM domain is found at 1436–1504 (TFLHNRLANE…SERALVVLDG (69 aa)). Positions 1448, 1475, 1516, and 1518 each coordinate Zn(2+).

It belongs to the helicase family. Dicer subfamily. Mg(2+) is required as a cofactor. The cofactor is Mn(2+).

Functionally, dicer-like endonuclease involved in cleaving double-stranded RNA in the RNA interference (RNAi) pathway. Produces 21 to 25 bp dsRNAs (siRNAs) which target the selective destruction of homologous RNAs leading to sequence-specific suppression of gene expression, called post-transcriptional gene silencing (PTGS). Part of a broad host defense response against viral infection and transposons. This is Dicer-like protein 1 (dcl1) from Aspergillus clavatus (strain ATCC 1007 / CBS 513.65 / DSM 816 / NCTC 3887 / NRRL 1 / QM 1276 / 107).